Reading from the N-terminus, the 1021-residue chain is Multidrug resistance protein MdtC (1021 aa).

Residues 1–6 (MKFFAL) lie on the Cytoplasmic side of the membrane. A helical transmembrane segment spans residues 7–29 (FIYRPVATILLSVAITLCGILGF). Topologically, residues 30–335 (RMLPVAPLPQ…TIRASLEEVE (306 aa)) are periplasmic. A helical membrane pass occupies residues 336–353 (QTLIISVALVILVVFLFL). Residues 354 to 359 (RSGRAT) are Cytoplasmic-facing. The helical transmembrane segment at 360–379 (IIPAVAVPVSLIGTFAAMYL) threads the bilayer. Over 380–388 (CGFSLNNLS) the chain is Periplasmic. The helical transmembrane segment at 389 to 411 (LMALTIATGFVVDDAIVVLENIA) threads the bilayer. At 412–430 (RHLEAGMKPLQAALQGTRE) the chain is on the cytoplasmic side. A helical transmembrane segment spans residues 431–453 (VGFTVLSMSLSLVAVFLPLLLMG). Topologically, residues 454-467 (GLPGRLLREFAVTL) are periplasmic. Residues 468 to 490 (SVAIGISLLVSLTLTPMMCGWML) form a helical membrane-spanning segment. Residues 491 to 848 (KASKPREQKR…QVFQETMNSQ (358 aa)) are Cytoplasmic-facing. Residues 849 to 871 (VILIIAAIATVYIVLGILYESYV) form a helical membrane-spanning segment. Over 872 to 890 (HPLTILSTLPSAGVGALLA) the chain is Periplasmic. The chain crosses the membrane as a helical span at residues 891 to 913 (LELFNAPFSLIALIGIMLLIGIV). Topologically, residues 914-943 (KKNAIMMVDFALEAQRHGNLTPQEAIFQAC) are cytoplasmic. The chain crosses the membrane as a helical span at residues 944 to 966 (LLRFRPIMMTTLAALFGALPLVL). Topologically, residues 967–980 (SGGDGSELRQPLEI) are periplasmic. Residues 981–1003 (TIVGGLVMSQLLTLYTTPVVYLF) form a helical membrane-spanning segment. Residues 1004 to 1021 (FDRLRLRFSRKPKQTVTE) are Cytoplasmic-facing.

Belongs to the resistance-nodulation-cell division (RND) (TC 2.A.6) family. MdtC subfamily. As to quaternary structure, part of a tripartite efflux system composed of MdtA, MdtB and MdtC. MdtC forms a heteromultimer with MdtB.

It localises to the cell inner membrane. The protein is Multidrug resistance protein MdtC of Shigella flexneri.